The primary structure comprises 129 residues: Small ribosomal subunit protein bS6 (129 aa).

Residues 103 to 129 (LKQKEERAERAPRREERAEAKPEAAAE) are disordered. Over residues 104–129 (KQKEERAERAPRREERAEAKPEAAAE) the composition is skewed to basic and acidic residues.

This sequence belongs to the bacterial ribosomal protein bS6 family.

Binds together with bS18 to 16S ribosomal RNA. The polypeptide is Small ribosomal subunit protein bS6 (Vibrio campbellii (strain ATCC BAA-1116)).